The sequence spans 540 residues: Glucose-6-phosphate isomerase (540 aa).

Catalysis depends on Glu-350, which acts as the Proton donor. Residues His-381 and Lys-503 contribute to the active site.

Belongs to the GPI family.

Its subcellular location is the cytoplasm. It carries out the reaction alpha-D-glucose 6-phosphate = beta-D-fructose 6-phosphate. It participates in carbohydrate biosynthesis; gluconeogenesis. It functions in the pathway carbohydrate degradation; glycolysis; D-glyceraldehyde 3-phosphate and glycerone phosphate from D-glucose: step 2/4. Its function is as follows. Catalyzes the reversible isomerization of glucose-6-phosphate to fructose-6-phosphate. The polypeptide is Glucose-6-phosphate isomerase (Burkholderia pseudomallei (strain 668)).